A 940-amino-acid chain; its full sequence is Isoleucine--tRNA ligase (940 aa).

Positions 58–68 (PYANGSIHIGH) match the 'HIGH' region motif. Glu564 provides a ligand contact to L-isoleucyl-5'-AMP. The 'KMSKS' region motif lies at 605–609 (KMSKS). Lys608 contacts ATP. Zn(2+) is bound by residues Cys903, Cys906, Cys923, and Cys926.

The protein belongs to the class-I aminoacyl-tRNA synthetase family. IleS type 1 subfamily. Monomer. Zn(2+) is required as a cofactor.

The protein resides in the cytoplasm. The enzyme catalyses tRNA(Ile) + L-isoleucine + ATP = L-isoleucyl-tRNA(Ile) + AMP + diphosphate. Functionally, catalyzes the attachment of isoleucine to tRNA(Ile). As IleRS can inadvertently accommodate and process structurally similar amino acids such as valine, to avoid such errors it has two additional distinct tRNA(Ile)-dependent editing activities. One activity is designated as 'pretransfer' editing and involves the hydrolysis of activated Val-AMP. The other activity is designated 'posttransfer' editing and involves deacylation of mischarged Val-tRNA(Ile). This chain is Isoleucine--tRNA ligase, found in Shewanella baltica (strain OS185).